Here is a 94-residue protein sequence, read N- to C-terminus: Mitochondrial import receptor subunit TOM9-1 (94 aa).

Over 1 to 48 (MAPKKIGAGKGDSSILAKISNYDIVSQGRRAACDAVYVSKKLLKSTGK) the chain is Cytoplasmic. The chain crosses the membrane as a helical span at residues 49–66 (AAWIAGTTFLILAVPLIL). The Mitochondrial intermembrane segment spans residues 67-94 (ELEQDHRLGEIDFEQASLLGTPPVGAML).

Belongs to the Tom22 family. In terms of assembly, forms part of the preprotein translocase complex of the outer mitochondrial membrane (TOM complex) which consists of at least 6 different proteins (TOM5, TOM6, TOM7, TOM20, TOM22/TOM9 and TOM40). As to expression, expressed in roots, flowers, young cotyledons and leaves.

Its subcellular location is the mitochondrion outer membrane. In terms of biological role, central component of the receptor complex responsible for the recognition and translocation of cytosolically synthesized mitochondrial preproteins. Together with TOM20 functions as the transit peptide receptor at the surface of the mitochondrion outer membrane and facilitates the movement of preproteins into the translocation pore. This chain is Mitochondrial import receptor subunit TOM9-1 (TOM9-1), found in Arabidopsis thaliana (Mouse-ear cress).